The following is an 808-amino-acid chain: MGLFNFLKLVSPRHRIYHKASKIANEVEGHKNYYRNLTDVQLLEESNKLVDLVTKQNYTILDVAVAALALIREVVYRETGEFAYRVQIIGAYIVLIGDFAEMMTGEGKTLTIVLAAYVSALEKRGVHVVTVNEYLAQRDATNATKILKRVGMTVGCNFANLAPHLKQAAFACDVTYTTNSELGFDYLRDNMVHRFEDKKIRELHFAIVDEGDSVLIDEARTPLIISGPAKNEFAAYVAVDRFVKKLKEDEYKIDPESRAPALTELGIKHAEKNFKTDNLFALENSDLFHKIINALTAVKVFEQGKEYIVRDGKVLIVDHFTGRILEGRSYSNGLHQAVQAKEMVEIEPENVIVATITYQSFFRLYNRLSAVSGTAFTESEEFLKIYNMVVVPVPTNRPNIRKDRADSVFGTPNIKWLAVVKEVKRIHETGRPILIGTANIDDSELLHNYLQEANIPHEVLNAKNHSREAEIVAKAGQKGAVTISTNMAGRGTDIRLGEGVAEMGGLYVLGTERNESRRIDNQLRGRAGRQGDRGETKFFISLGDALFKRFAHDRIERAITKLGNDTFDSSFFSKMLSRTQKRVEAINFDTRKNLIDYDHVLASQRELIYKQRDKFLLATDLSDMIDKMLEKFVEQFCDQYRNPKNQNLVNHIALSEALNLELNMHGVISPKLFENMTFDATVHKTHSLIGEKITNKVKVLTPPIALIRFREIMITAMDKHWIEHLDNVFKLREGVTLRSMEQTSPLNVYIRETDILFQTMLQKIARDVIIQIANLATPEEFDEELMKANALKKLQALREAHEKSNEGQ.

ATP is bound by residues Gln87, 105–109, and Asp493; that span reads GEGKT.

The protein belongs to the SecA family. In terms of assembly, monomer and homodimer. Part of the essential Sec protein translocation apparatus which comprises SecA, SecYEG and auxiliary proteins SecDF. Other proteins may also be involved.

It localises to the cell membrane. It is found in the cytoplasm. The enzyme catalyses ATP + H2O + cellular proteinSide 1 = ADP + phosphate + cellular proteinSide 2.. Its function is as follows. Part of the Sec protein translocase complex. Interacts with the SecYEG preprotein conducting channel. Has a central role in coupling the hydrolysis of ATP to the transfer of proteins into and across the cell membrane, serving as an ATP-driven molecular motor driving the stepwise translocation of polypeptide chains across the membrane. The sequence is that of Protein translocase subunit SecA from Mycoplasma pneumoniae (strain ATCC 29342 / M129 / Subtype 1) (Mycoplasmoides pneumoniae).